The sequence spans 439 residues: Methylenetetrahydrofolate--tRNA-(uracil-5-)-methyltransferase TrmFO (439 aa).

8-13 (GGGLAG) lines the FAD pocket.

The protein belongs to the MnmG family. TrmFO subfamily. Requires FAD as cofactor.

It is found in the cytoplasm. It carries out the reaction uridine(54) in tRNA + (6R)-5,10-methylene-5,6,7,8-tetrahydrofolate + NADH + H(+) = 5-methyluridine(54) in tRNA + (6S)-5,6,7,8-tetrahydrofolate + NAD(+). The enzyme catalyses uridine(54) in tRNA + (6R)-5,10-methylene-5,6,7,8-tetrahydrofolate + NADPH + H(+) = 5-methyluridine(54) in tRNA + (6S)-5,6,7,8-tetrahydrofolate + NADP(+). Its function is as follows. Catalyzes the folate-dependent formation of 5-methyl-uridine at position 54 (M-5-U54) in all tRNAs. This chain is Methylenetetrahydrofolate--tRNA-(uracil-5-)-methyltransferase TrmFO, found in Dictyoglomus turgidum (strain DSM 6724 / Z-1310).